A 540-amino-acid polypeptide reads, in one-letter code: Chaperonin GroEL (540 aa).

Residues 29–32 (TLGP), 86–90 (DGTTT), G413, 476–478 (NAA), and D492 each bind ATP.

Belongs to the chaperonin (HSP60) family. In terms of assembly, forms a cylinder of 14 subunits composed of two heptameric rings stacked back-to-back. Interacts with the co-chaperonin GroES.

The protein resides in the cytoplasm. It catalyses the reaction ATP + H2O + a folded polypeptide = ADP + phosphate + an unfolded polypeptide.. Its function is as follows. Together with its co-chaperonin GroES, plays an essential role in assisting protein folding. The GroEL-GroES system forms a nano-cage that allows encapsulation of the non-native substrate proteins and provides a physical environment optimized to promote and accelerate protein folding. In Streptococcus pneumoniae (strain ATCC 700669 / Spain 23F-1), this protein is Chaperonin GroEL.